A 5101-amino-acid chain; its full sequence is Malformin synthetase mlfA (5101 aa).

The tract at residues 225–616 is adenylation 1; that stretch reads ERHAANRPHS…CGRADTQVKL (392 aa). The Carrier 1 domain maps to 757–830; the sequence is SRLEQKIQLA…EAASLAEVQE (74 aa). Residue S791 is modified to O-(pantetheine 4'-phosphoryl)serine. Residues 868–1299 are condensation 1; that stretch reads EDVFPCTTMQ…ALNTLSLLQA (432 aa). The segment at 1327-1716 is adenylation 2; sequence DRWVTRQPEG…GRKDTQVKLR (390 aa). The region spanning 1854 to 1931 is the Carrier 2 domain; it reads TPTLELERTL…QLAAEVGEPA (78 aa). S1891 is subject to O-(pantetheine 4'-phosphoryl)serine. Disordered regions lie at residues 1932–1961 and 1994–2020; these read GQSA…DGVD and GGSS…KKNA. Composition is skewed to low complexity over residues 1934–1958 and 1996–2013; these read SASS…STND and SSSN…SSSS. The condensation 2 stretch occupies residues 2066 to 2481; sequence EDIYPATALQ…AVSCSDKETL (416 aa). The tract at residues 2504 to 2896 is adenylation 3; sequence RRTPHAPAVC…IGRRDGQLKL (393 aa). The Carrier 3 domain maps to 3032–3108; sequence RPVTSQEHEM…QLICHLNTIR (77 aa). S3069 carries the post-translational modification O-(pantetheine 4'-phosphoryl)serine. 2 condensation regions span residues 3125 to 3590 and 3611 to 4030; these read WVAL…TYDQ and NIYP…EHLV. The adenylation 4 stretch occupies residues 4055–4445; that stretch reads HNSRQAVCAW…VGRKDNQIKF (391 aa). In terms of domain architecture, Carrier 4 spans 4579–4655; it reads MPSTAAERKM…DLSDQAKSLI (77 aa). S4616 carries the O-(pantetheine 4'-phosphoryl)serine modification. Residues 4712 to 5097 form a condensation 5 region; the sequence is IVVDIPGPID…KIVGLLRHPE (386 aa).

Belongs to the NRP synthetase family.

It participates in secondary metabolite biosynthesis. Its function is as follows. Nonribosomal peptide synthetase; part of the gene cluster that mediates the biosynthesis of malformins, cyclic pentapeptides with a disulfide bond between 2 consecutive cysteins, that show potential anti-tumor as well as antimalarial and antitrypanosomal properties. The nonribosomal peptide synthetase mlfA is responsible of the formation of the cyclic pentapeptide. The malformin biosynthesis clusters in malformin-producing fungi also contain enzymes involved in the formation of the disulfide bond between the two consecutive cysteins within malformins, in addition to additional tailoring enzymes such as methyltransferases or oxidoreductases. They are also composed of up to 4 major facilitator superfamily transporters, and transcription factors probably involved in the regulation of the expression of those clusters. The protein is Malformin synthetase mlfA of Aspergillus kawachii (strain NBRC 4308) (White koji mold).